The chain runs to 409 residues: Putative competence-damage inducible protein (409 aa).

It belongs to the CinA family.

This is Putative competence-damage inducible protein from Clostridium tetani (strain Massachusetts / E88).